The sequence spans 174 residues: Nucleoside-triphosphatase THEP1 (174 aa).

ATP contacts are provided by residues 7–14 (GRPGVGKT) and 94–101 (LIIIDEIG).

This sequence belongs to the THEP1 NTPase family.

It catalyses the reaction a ribonucleoside 5'-triphosphate + H2O = a ribonucleoside 5'-diphosphate + phosphate + H(+). Functionally, has nucleotide phosphatase activity towards ATP, GTP, CTP, TTP and UTP. May hydrolyze nucleoside diphosphates with lower efficiency. The sequence is that of Nucleoside-triphosphatase THEP1 from Thermotoga sp. (strain RQ2).